A 355-amino-acid chain; its full sequence is DNA polymerase IV (355 aa).

In terms of domain architecture, UmuC spans 7 to 188 (IIHIDMDCFY…LPVRKLFGVG (182 aa)). The Mg(2+) site is built by aspartate 11 and aspartate 106. The active site involves glutamate 107.

It belongs to the DNA polymerase type-Y family. In terms of assembly, monomer. Requires Mg(2+) as cofactor.

Its subcellular location is the cytoplasm. The catalysed reaction is DNA(n) + a 2'-deoxyribonucleoside 5'-triphosphate = DNA(n+1) + diphosphate. Poorly processive, error-prone DNA polymerase involved in untargeted mutagenesis. Copies undamaged DNA at stalled replication forks, which arise in vivo from mismatched or misaligned primer ends. These misaligned primers can be extended by PolIV. Exhibits no 3'-5' exonuclease (proofreading) activity. May be involved in translesional synthesis, in conjunction with the beta clamp from PolIII. The chain is DNA polymerase IV from Legionella pneumophila subsp. pneumophila (strain Philadelphia 1 / ATCC 33152 / DSM 7513).